We begin with the raw amino-acid sequence, 361 residues long: Probable purine permease 5 (361 aa).

A run of 9 helical transmembrane segments spans residues 37 to 57 (WILL…SSLL), 70 to 90 (WIIS…LLPT), 105 to 125 (LVLS…MYAY), 134 to 154 (TSSL…YLIV), 158 to 178 (LNAS…IIAL), 193 to 213 (YFAG…IFAL), 235 to 255 (VMVS…SNDF), 285 to 305 (LGVL…AGVL), and 315 to 335 (VAAV…SLVL). One can recognise an EamA domain in the interval 75–178 (VAVAGWPITC…ITGAMAIIAL (104 aa)).

It belongs to the purine permeases (TC 2.A.7.14) family.

It localises to the membrane. This is Probable purine permease 5 (PUP5) from Arabidopsis thaliana (Mouse-ear cress).